A 180-amino-acid polypeptide reads, in one-letter code: Shikimate kinase (180 aa).

19–24 (GAGKTT) is a binding site for ATP. T23 is a binding site for Mg(2+). The substrate site is built by D41, R65, and G87. Residue R125 coordinates ATP. Residue R144 coordinates substrate.

The protein belongs to the shikimate kinase family. As to quaternary structure, monomer. The cofactor is Mg(2+).

The protein localises to the cytoplasm. It catalyses the reaction shikimate + ATP = 3-phosphoshikimate + ADP + H(+). The protein operates within metabolic intermediate biosynthesis; chorismate biosynthesis; chorismate from D-erythrose 4-phosphate and phosphoenolpyruvate: step 5/7. Functionally, catalyzes the specific phosphorylation of the 3-hydroxyl group of shikimic acid using ATP as a cosubstrate. In Acinetobacter baylyi (strain ATCC 33305 / BD413 / ADP1), this protein is Shikimate kinase.